We begin with the raw amino-acid sequence, 277 residues long: Myelin proteolipid protein (277 aa).

Over 2 to 10 the chain is Cytoplasmic; sequence GLLECCARC. Residues cysteine 6, cysteine 7, and cysteine 10 are each lipidated (S-palmitoyl cysteine). Residues 11-36 traverse the membrane as a helical segment; it reads LIGAPFASLVATGLCFFGVALFCGCG. Residues 37-59 are Extracellular-facing; it reads HEALTGTEQLIETYFSKNYQDYE. The chain crosses the membrane as a helical span at residues 60 to 88; it reads YLIDVIHAFQYVIYGTASFFFLYGALLLA. The Cytoplasmic segment spans residues 89–151; that stretch reads EGFYTTGAVR…LGKWLGHPDK (63 aa). 3 S-palmitoyl cysteine lipidation sites follow: cysteine 109, cysteine 139, and cysteine 141. A helical transmembrane segment spans residues 152-178; sequence FVGITYVLTIVWLLAFACSAVPVYIYF. At 179–238 the chain is on the extracellular side; the sequence is NTWTTCQSIAFPTKTTASIGTLCADARMYGVLPWNAFPGKVCGSNLLSICKTSEFQMTFH. 2 disulfide bridges follow: cysteine 184–cysteine 228 and cysteine 201–cysteine 220. The O-palmitoyl threonine moiety is linked to residue threonine 199. A helical membrane pass occupies residues 239-268; it reads LFIAAFVGAAATLVSLLTFMIAATYNFAVL. At 269–277 the chain is on the cytoplasmic side; the sequence is KLMGRGTKF.

It belongs to the myelin proteolipid protein family.

The protein localises to the cell membrane. Its function is as follows. This is the major myelin protein from the central nervous system. It plays an important role in the formation or maintenance of the multilamellar structure of myelin. The sequence is that of Myelin proteolipid protein (PLP1) from Gallus gallus (Chicken).